Reading from the N-terminus, the 219-residue chain is Lipid transferase CIDEA (219 aa).

The 78-residue stretch at 33–110 (PARPFRVSNH…ILEKGQKWMP (78 aa)) folds into the CIDE-N domain. Residues 163–180 (CTGLKGLLRSLLRFLSYS) form an amphipathic helix region.

The protein belongs to the CIDE family. Homodimer. Interacts with CIDEC. Directly interacts with CEBPB. Interacts with isoform CLSTN3beta of CLSTN3; inhibiting the lipid transferase activity of CIDEA. In terms of tissue distribution, expressed in omental and subcutaneous adipose tissue (at protein level).

The protein resides in the lipid droplet. It is found in the nucleus. The enzyme catalyses a triacyl-sn-glycerol(in) = a triacyl-sn-glycerol(out). In terms of biological role, lipid transferase that promotes unilocular lipid droplet formation by mediating lipid droplet fusion. Lipid droplet fusion promotes their enlargement, restricting lipolysis and favoring lipid storage. Localizes on the lipid droplet surface, at focal contact sites between lipid droplets, and mediates atypical lipid droplet fusion by promoting directional net neutral lipid transfer from the smaller to larger lipid droplets. The transfer direction may be driven by the internal pressure difference between the contacting lipid droplet pair and occurs at a lower rate than that promoted by CIDEC. May also act as a CEBPB coactivator in epithelial cells to control the expression of a subset of CEBPB downstream target genes, including ID2, IGF1, PRLR, SOCS1, SOCS3, XDH, but not casein. By interacting with CEBPB, strengthens the association of CEBPB with the XDH promoter, increases histone acetylation and dissociates HDAC1 from the promoter. When overexpressed, induces apoptosis; the physiological significance of its role in apoptosis is unclear. The sequence is that of Lipid transferase CIDEA from Homo sapiens (Human).